We begin with the raw amino-acid sequence, 115 residues long: Large ribosomal subunit protein uL18 (115 aa).

The protein belongs to the universal ribosomal protein uL18 family. As to quaternary structure, part of the 50S ribosomal subunit; part of the 5S rRNA/L5/L18/L25 subcomplex. Contacts the 5S and 23S rRNAs.

This is one of the proteins that bind and probably mediate the attachment of the 5S RNA into the large ribosomal subunit, where it forms part of the central protuberance. The chain is Large ribosomal subunit protein uL18 from Marinobacter nauticus (strain ATCC 700491 / DSM 11845 / VT8) (Marinobacter aquaeolei).